A 257-amino-acid polypeptide reads, in one-letter code: Type III pantothenate kinase (257 aa).

ATP is bound at residue 6–13; sequence DVGNTSTK. 109-112 is a binding site for substrate; that stretch reads GADR. Asp111 acts as the Proton acceptor in catalysis. Asp132 is a K(+) binding site. Thr135 provides a ligand contact to ATP. Thr187 serves as a coordination point for substrate.

This sequence belongs to the type III pantothenate kinase family. In terms of assembly, homodimer. It depends on NH4(+) as a cofactor. The cofactor is K(+).

The protein localises to the cytoplasm. It carries out the reaction (R)-pantothenate + ATP = (R)-4'-phosphopantothenate + ADP + H(+). It functions in the pathway cofactor biosynthesis; coenzyme A biosynthesis; CoA from (R)-pantothenate: step 1/5. Its function is as follows. Catalyzes the phosphorylation of pantothenate (Pan), the first step in CoA biosynthesis. This chain is Type III pantothenate kinase, found in Anaplasma marginale (strain Florida).